The following is a 246-amino-acid chain: DNA repair protein RecO (246 aa).

The protein belongs to the RecO family.

Involved in DNA repair and RecF pathway recombination. The protein is DNA repair protein RecO of Cutibacterium acnes (strain DSM 16379 / KPA171202) (Propionibacterium acnes).